A 374-amino-acid chain; its full sequence is MPRLSQDNQQGHQKHFSRPSRRIQFLPPPWTEAYNVNVHQTVENEGCATAMHNVKLLGSPAAPTLLSLLSGTLSGFARFFALLLRRPPPEAPLRRRDFSALIPALPAAVLSPGHEERPGRLSLLLRAALALPGRPPGGRLPREVDASAGQSSSIPPMGSEWMEMRKRPVCAAQEPTACAPGQPGVENQGSNACCFCWCCCCSCSCLTVRNQEEQRLRRTSYEARTEDLPTCEESPGPTLEEASAWAQSFDKLMLTPAGRNAFREFLRTEFSEENMLFWMACEELKKEANKATIEEKARIIYEDYISILSPKEVSLDSRVRETINRSMAEPSRNIFDDAQLQIYTLMHRDSYPRFMNSALYKDLLRSLSEKAVEA.

Polar residues predominate over residues 1-11 (MPRLSQDNQQG). Disordered stretches follow at residues 1–21 (MPRL…RPSR) and 135–158 (PPGG…PPMG). The segment covering 12–21 (HQKHFSRPSR) has biased composition (basic residues). Residues 248–364 (SFDKLMLTPA…MNSALYKDLL (117 aa)) form the RGS domain.

Forms a complex with G(alpha)z/i2 subunits and mu-opioid receptors; the formation of this complex results in mu-opioid receptor desensitization. Interacts with OPRM1. In terms of processing, fatty acylated. Heavily palmitoylated in the cysteine string motif. N- and O-glycosylated in synapsomal membranes. Post-translationally, serine phosphorylated in synapsomal membranes. In terms of processing, sumoylated with SUMO1 and SUMO2 in synaptosomes. The sumoylated forms act as a scaffold for sequestering mu-opioid receptor-activated G(alpha) subunits. In terms of tissue distribution, retinal-specific. Expressed throughout the retina, including photoreceptors.

It is found in the membrane. Its subcellular location is the nucleus. It localises to the cytoplasm. Its function is as follows. Inhibits signal transduction by increasing the GTPase activity of G protein alpha subunits thereby driving them into their inactive GDP-bound form. Binds selectively to G(z)-alpha and G(alpha)-i2 subunits, accelerates their GTPase activity and regulates their signaling activities. The G(z)-alpha activity is inhibited by the phosphorylation and palmitoylation of the G-protein. Negatively regulates mu-opioid receptor-mediated activation of the G-proteins. The protein is Regulator of G-protein signaling 20 (RGS20) of Bos taurus (Bovine).